The primary structure comprises 404 residues: Multidrug resistance protein MdtG (404 aa).

The next 11 helical transmembrane spans lie at 19-39, 56-76, 90-110, 113-133, 144-164, 171-191, 222-242, 254-274, 288-308, 317-337, and 376-396; these read LGCF…PLYV, LVFS…GGLA, LGMA…QFLI, ALLG…ATQV, TLST…GLLA, PVFF…FFFI, LFVT…ILTL, IAFI…LSAP, ILIV…FVQT, FLLG…LVYN, and AVFC…WNSL.

This sequence belongs to the major facilitator superfamily. DHA1 family. MdtG (TC 2.A.1.2.20) subfamily.

Its subcellular location is the cell inner membrane. This Salmonella typhi protein is Multidrug resistance protein MdtG.